We begin with the raw amino-acid sequence, 584 residues long: MAVDTETTTTTIPVTDSDRIDDQNNLTSNAIPHASEKTVPDSPASEQNEVSDESEDKPSKTKKSFGFYAIIVALALTSLLTSLEATITSTALPTITSELGGASLYVWVVNGYYLTQTAFQPFVGQMADIYGRRWPMICSAAMFTIGSGVAGGSKNIQTLIAGRLLQGIGSGGILVLTEIIICDLLPLRERGKYLGMIVSLVGIGAALGPLFGGLIVQYSSWPWVFYLNVPIGGVACLMLFFFLRVRSDKTPNYMQRLRRFDWIGNVLFVMSMVSILIALSWAGTEYPWSSFRVVVPLVLGFVGSAAFVVYEGSSFCVNPTMPLHIFSNRTSGTAFAVTFLHTLSSVSVMYFLPVYFQAVLNASPSRSGVQLLPTILFMIPGAIAGGTLLSKFGRYRPLQHGGLAFMIIGFGLLTLLDADSNTGEWVGYQLLGALGTGLALPVLLPAVQAPLTEEDTALCTATWSFMRTYGFIWGATIATAVFNNRFDVLAPRITDTTIGSQLTNGRAYELATKVFMNSIKDPVTQREVKSVYVDALNVVWYVSLAFAGLGFLLVFLEKEITLRKELDTKYAMEEKKKKPENSEA.

Residues 1-11 (MAVDTETTTTT) are compositionally biased toward low complexity. The interval 1-60 (MAVDTETTTTTIPVTDSDRIDDQNNLTSNAIPHASEKTVPDSPASEQNEVSDESEDKPSK) is disordered. N-linked (GlcNAc...) asparagine glycosylation occurs at Asn25. A run of 8 helical transmembrane segments spans residues 65–85 (FGFY…SLEA), 99–119 (LGGA…QTAF), 134–154 (WPMI…GGSK), 167–187 (GIGS…LLPL), 196–216 (MIVS…GLIV), 223–243 (WVFY…FFFL), 262–282 (WIGN…LSWA), and 293–313 (VVVP…YEGS). The N-linked (GlcNAc...) asparagine glycan is linked to Asn328. 6 helical membrane-spanning segments follow: residues 334 to 354 (AFAV…FLPV), 369 to 389 (VQLL…GTLL), 398 to 418 (LQHG…LLDA), 425 to 445 (WVGY…VLLP), 462 to 482 (TWSF…TAVF), and 536 to 556 (LNVV…LVFL).

Belongs to the major facilitator superfamily.

It localises to the membrane. Functionally, MFS-type transporter; part of the gene cluster that mediates the biosynthesis of GKK1032, fungal natural products containing a macrocyclic para-cyclophane connected to a decahydrofluorene ring system that show potent antitumor activities. This chain is MFS-type transporter gkaD, found in Penicillium citrinum.